The sequence spans 875 residues: Phosphoenolpyruvate carboxylase (875 aa).

Active-site residues include His137 and Lys542.

Belongs to the PEPCase type 1 family. It depends on Mg(2+) as a cofactor.

It catalyses the reaction oxaloacetate + phosphate = phosphoenolpyruvate + hydrogencarbonate. In terms of biological role, forms oxaloacetate, a four-carbon dicarboxylic acid source for the tricarboxylic acid cycle. The sequence is that of Phosphoenolpyruvate carboxylase from Pseudomonas putida (strain ATCC 700007 / DSM 6899 / JCM 31910 / BCRC 17059 / LMG 24140 / F1).